We begin with the raw amino-acid sequence, 120 residues long: NAD(P)H-quinone oxidoreductase subunit 3, chloroplastic (120 aa).

The next 3 helical transmembrane spans lie at 9 to 29 (IFWA…LISG), 64 to 84 (MFAL…PWAM), and 88 to 108 (VLGV…IVGS).

Belongs to the complex I subunit 3 family. NDH is composed of at least 16 different subunits, 5 of which are encoded in the nucleus.

It localises to the plastid. It is found in the chloroplast thylakoid membrane. The enzyme catalyses a plastoquinone + NADH + (n+1) H(+)(in) = a plastoquinol + NAD(+) + n H(+)(out). It carries out the reaction a plastoquinone + NADPH + (n+1) H(+)(in) = a plastoquinol + NADP(+) + n H(+)(out). Its function is as follows. NDH shuttles electrons from NAD(P)H:plastoquinone, via FMN and iron-sulfur (Fe-S) centers, to quinones in the photosynthetic chain and possibly in a chloroplast respiratory chain. The immediate electron acceptor for the enzyme in this species is believed to be plastoquinone. Couples the redox reaction to proton translocation, and thus conserves the redox energy in a proton gradient. The sequence is that of NAD(P)H-quinone oxidoreductase subunit 3, chloroplastic from Illicium oligandrum (Star anise).